A 200-amino-acid chain; its full sequence is Holliday junction resolvase RecU (200 aa).

Mg(2+) contacts are provided by Thr85, Asp87, Glu100, and Gln119.

Belongs to the RecU family. Mg(2+) serves as cofactor.

Its subcellular location is the cytoplasm. It carries out the reaction Endonucleolytic cleavage at a junction such as a reciprocal single-stranded crossover between two homologous DNA duplexes (Holliday junction).. Its function is as follows. Endonuclease that resolves Holliday junction intermediates in genetic recombination. Cleaves mobile four-strand junctions by introducing symmetrical nicks in paired strands. Promotes annealing of linear ssDNA with homologous dsDNA. Required for DNA repair, homologous recombination and chromosome segregation. The sequence is that of Holliday junction resolvase RecU from Bacillus cytotoxicus (strain DSM 22905 / CIP 110041 / 391-98 / NVH 391-98).